A 123-amino-acid polypeptide reads, in one-letter code: Ribonuclease P protein component 2 (123 aa).

The protein belongs to the eukaryotic/archaeal RNase P protein component 2 family. As to quaternary structure, consists of a catalytic RNA component and at least 4-5 protein subunits.

The protein localises to the cytoplasm. It catalyses the reaction Endonucleolytic cleavage of RNA, removing 5'-extranucleotides from tRNA precursor.. Functionally, part of ribonuclease P, a protein complex that generates mature tRNA molecules by cleaving their 5'-ends. The chain is Ribonuclease P protein component 2 from Sulfurisphaera tokodaii (strain DSM 16993 / JCM 10545 / NBRC 100140 / 7) (Sulfolobus tokodaii).